The sequence spans 195 residues: MSKIEHNSAKTIDGGAAALHKTVVMVGMMGAGKTAVGRALAQRLGVPFLDSDAEIESAANMSIPEIFERDGEAFFRDRESRVIARLLEGAPCVLSTGGGAFLAEANRRMISEHGVSVWLKADLTVLWNRVRHKDTRPLLRTADPRATLRALYEARVPLYSEADLCVISDGETSIEQMVDRVIAALATRKDVLELS.

30-35 is a binding site for ATP; it reads GAGKTA. Threonine 34 serves as a coordination point for Mg(2+). Residues aspartate 52, arginine 76, and glycine 98 each coordinate substrate. Arginine 136 serves as a coordination point for ATP. Arginine 155 is a substrate binding site.

Belongs to the shikimate kinase family. As to quaternary structure, monomer. Mg(2+) is required as a cofactor.

It is found in the cytoplasm. The enzyme catalyses shikimate + ATP = 3-phosphoshikimate + ADP + H(+). Its pathway is metabolic intermediate biosynthesis; chorismate biosynthesis; chorismate from D-erythrose 4-phosphate and phosphoenolpyruvate: step 5/7. Its function is as follows. Catalyzes the specific phosphorylation of the 3-hydroxyl group of shikimic acid using ATP as a cosubstrate. This Ruegeria pomeroyi (strain ATCC 700808 / DSM 15171 / DSS-3) (Silicibacter pomeroyi) protein is Shikimate kinase.